Reading from the N-terminus, the 87-residue chain is uncharacterized protein (87 aa).

Residues 52-87 (KWQPRPDANNSDTTTSTEDSTTDTETEYSTTEDELA) form a disordered region. Residues 71–87 (STTDTETEYSTTEDELA) are compositionally biased toward acidic residues.

This is an uncharacterized protein from Autographa californica nuclear polyhedrosis virus (AcMNPV).